A 754-amino-acid chain; its full sequence is 5-methyltetrahydropteroyltriglutamate--homocysteine methyltransferase (754 aa).

Residues 17-20 and lysine 110 each bind 5-methyltetrahydropteroyltri-L-glutamate; that span reads RELK. L-homocysteine-binding positions include 421-423 and glutamate 474; that span reads IGS. L-methionine is bound by residues 421–423 and glutamate 474; that span reads IGS. 5-methyltetrahydropteroyltri-L-glutamate-binding positions include 505–506 and tryptophan 551; that span reads RC. Residue aspartate 589 participates in L-homocysteine binding. Aspartate 589 is a binding site for L-methionine. Glutamate 595 lines the 5-methyltetrahydropteroyltri-L-glutamate pocket. The Zn(2+) site is built by histidine 631, cysteine 633, and glutamate 655. Histidine 684 acts as the Proton donor in catalysis. Cysteine 716 provides a ligand contact to Zn(2+).

This sequence belongs to the vitamin-B12 independent methionine synthase family. Requires Zn(2+) as cofactor.

The catalysed reaction is 5-methyltetrahydropteroyltri-L-glutamate + L-homocysteine = tetrahydropteroyltri-L-glutamate + L-methionine. The protein operates within amino-acid biosynthesis; L-methionine biosynthesis via de novo pathway; L-methionine from L-homocysteine (MetE route): step 1/1. Its function is as follows. Catalyzes the transfer of a methyl group from 5-methyltetrahydrofolate to homocysteine resulting in methionine formation. The chain is 5-methyltetrahydropteroyltriglutamate--homocysteine methyltransferase from Synechococcus sp. (strain JA-2-3B'a(2-13)) (Cyanobacteria bacterium Yellowstone B-Prime).